The following is a 171-amino-acid chain: Large ribosomal subunit protein uL10 (171 aa).

This sequence belongs to the universal ribosomal protein uL10 family. Part of the ribosomal stalk of the 50S ribosomal subunit. The N-terminus interacts with L11 and the large rRNA to form the base of the stalk. The C-terminus forms an elongated spine to which L12 dimers bind in a sequential fashion forming a multimeric L10(L12)X complex.

Functionally, forms part of the ribosomal stalk, playing a central role in the interaction of the ribosome with GTP-bound translation factors. The chain is Large ribosomal subunit protein uL10 from Corynebacterium jeikeium (strain K411).